Reading from the N-terminus, the 362-residue chain is 3-dehydroquinate synthase (362 aa).

NAD(+) contacts are provided by residues 70–75 (DGEKYK), 104–108 (GVIGD), 128–129 (TT), lysine 141, lysine 150, and 168–171 (TLNT). Glutamate 183, histidine 246, and histidine 263 together coordinate Zn(2+).

This sequence belongs to the sugar phosphate cyclases superfamily. Dehydroquinate synthase family. Co(2+) serves as cofactor. The cofactor is Zn(2+). Requires NAD(+) as cofactor.

The protein resides in the cytoplasm. It catalyses the reaction 7-phospho-2-dehydro-3-deoxy-D-arabino-heptonate = 3-dehydroquinate + phosphate. It participates in metabolic intermediate biosynthesis; chorismate biosynthesis; chorismate from D-erythrose 4-phosphate and phosphoenolpyruvate: step 2/7. Its function is as follows. Catalyzes the conversion of 3-deoxy-D-arabino-heptulosonate 7-phosphate (DAHP) to dehydroquinate (DHQ). The protein is 3-dehydroquinate synthase of Haemophilus influenzae (strain 86-028NP).